The chain runs to 87 residues: UPF0473 protein Daud_0916 (87 aa).

This sequence belongs to the UPF0473 family.

This chain is UPF0473 protein Daud_0916, found in Desulforudis audaxviator (strain MP104C).